We begin with the raw amino-acid sequence, 164 residues long: Transcription factor E (164 aa).

Residues 5–87 (NDKVIRGYLR…LWHLDFSDIE (83 aa)) form the HTH TFE/IIEalpha-type domain.

It belongs to the TFE family. In terms of assembly, monomer. Interaction with RNA polymerase subunits RpoF and RpoE is necessary for Tfe stimulatory transcription activity. Able to interact with Tbp and RNA polymerase in the absence of DNA promoter. Interacts both with the preinitiation and elongation complexes.

In terms of biological role, transcription factor that plays a role in the activation of archaeal genes transcribed by RNA polymerase. Facilitates transcription initiation by enhancing TATA-box recognition by TATA-box-binding protein (Tbp), and transcription factor B (Tfb) and RNA polymerase recruitment. Not absolutely required for transcription in vitro, but particularly important in cases where Tbp or Tfb function is not optimal. It dynamically alters the nucleic acid-binding properties of RNA polymerases by stabilizing the initiation complex and destabilizing elongation complexes. Seems to translocate with the RNA polymerase following initiation and acts by binding to the non template strand of the transcription bubble in elongation complexes. This Methanosarcina mazei (strain ATCC BAA-159 / DSM 3647 / Goe1 / Go1 / JCM 11833 / OCM 88) (Methanosarcina frisia) protein is Transcription factor E.